Reading from the N-terminus, the 762-residue chain is MAVVAAAAATGSTTRSGGGGGEGTRSGRKKPPPPPLQERVPLGRRAAWAWRLAGLAVLLLLLALLALRLLRHHGGAGGDAGVWRVALVCEAWFAALCALNVSAKWSPVRFVTRPENLVAEGRTPSTTAAEYGELPAVDMLVTTADPALEPPLVTVNTVLSLLALDYPRAGERLACYVSDDGCSPLTCHALREAAGFAAAWVPFCRRYGVAVRAPFRYFSSSSSPESGGPADRKFLDDWTFMKDEYDKLVRRIKNTDERSLLRHGGGEFFAEFLNVERRNHPTIVKTRVSAVMTNAPIMLNMDCDMFVNNPQAVLHAMCLLLGFDDEASSGFVQAPQRFYDALKDDPFGNQMECFFKRFISGVQGVQGAFYAGTGCFHRRKAVYGVPPNFNGAEREDTIGSSSYKELHTRFGNSEELNESARNIIWDLSSKPMVDISSRIEVAKAVSACNYDIGTCWGQEVGWVYGSLTEDILTGQRIHAMGWRSVLMVTEPPAFMGSAPIGGPACLTQFKRWATGQSEIIISRNNPILATMFKRLKFRQCLAYLIVLGWPLRAPFELCYGLLGPYCILTNQSFLPKASEDGFSVPLALFISYNTYNFMEYMACGLSARAWWNNHRMQRIISVSAWTLAFLTVLLKSLGLSETVFEVTGKDKSMSDDDDNTDGADPGRFTFDSLPVFIPVTALAMLNIVAVTVGACRVAFGTAEGVPCAPGIGEFMCCGWLVLCFFPFVRGIVWGKGSYGIPWSVKLKASLLVAMFVTFCKRN.

A compositionally biased stretch (low complexity) spans 1–15 (MAVVAAAAATGSTTR). The interval 1–39 (MAVVAAAAATGSTTRSGGGGGEGTRSGRKKPPPPPLQER) is disordered. 2 helical membrane-spanning segments follow: residues 47-67 (AWAW…LLAL) and 81-101 (GVWR…ALNV). Catalysis depends on residues Asp-180 and Asp-470. 6 helical membrane-spanning segments follow: residues 541–561 (LAYL…CYGL), 582–602 (FSVP…EYMA), 619–639 (IISV…SLGL), 673–693 (LPVF…VTVG), 708–728 (APGI…FPFV), and 739–759 (GIPW…VTFC).

The protein belongs to the glycosyltransferase 2 family. Plant cellulose synthase-like H subfamily.

The protein resides in the golgi apparatus membrane. Thought to be a Golgi-localized beta-glycan synthase that polymerize the backbones of noncellulosic polysaccharides (hemicelluloses) of plant cell wall. The sequence is that of Cellulose synthase-like protein H2 (CSLH2) from Oryza sativa subsp. indica (Rice).